We begin with the raw amino-acid sequence, 276 residues long: Rhomboid-type serine protease 2 (276 aa).

5 helical membrane-spanning segments follow: residues leucine 27–valine 47, phenylalanine 77–leucine 97, threonine 109–valine 129, phenylalanine 132–glycine 152, and tryptophan 175–leucine 195. The active-site Nucleophile is serine 144. Histidine 197 is a catalytic residue. A helical membrane pass occupies residues leucine 198–proline 218.

This sequence belongs to the peptidase S54 family.

Its subcellular location is the golgi apparatus membrane. The protein resides in the golgi apparatus. It is found in the cis-Golgi network membrane. The enzyme catalyses Cleaves type-1 transmembrane domains using a catalytic dyad composed of serine and histidine that are contributed by different transmembrane domains.. Probable rhomboid-type serine protease that catalyzes intramembrane proteolysis. This is Rhomboid-type serine protease 2 (rbd-2) from Neurospora crassa (strain ATCC 24698 / 74-OR23-1A / CBS 708.71 / DSM 1257 / FGSC 987).